Consider the following 525-residue polypeptide: MTVVPGDHLLEPEAAGGGGGDPPQGGCVSGGGCDRYEPLPPALPAAGEQDCCGERVVINISGLRFETQLKTLCQFPETLLGDPKRRMRYFDPLRNEYFFDRNRPSFDAILYYYQSGGRIRRPVNVPIDIFSEEIRFYQLGEEAMEKFREDEGFLREEERPLPRRDFQRQVWLLFEYPESSGPARGIAIVSVLVILISIVIFCLETLPEFRDEKDYPASPSQDVFEAANNSTSGASSGASSFSDPFFVVETLCIIWFSFELLVRFFACPSKATFSRNIMNLIDIVAIIPYFITLGTELAERQGNGQQAMSLAILRVIRLVRVFRIFKLSRHSKGLQILGQTLKASMRELGLLIFFLFIGVILFSSAVYFAEADDPSSGFNSIPDAFWWAVVTMTTVGYGDMHPVTIGGKIVGSLCAIAGVLTIALPVPVIVSNFNYFYHRETEGEEQAQYMHVGSCQHLSSSAEELRKARSNSTLSKSEYMVIEEGGMNHSAFPQTPFKTGNSTATCTTNNNPNSCVNIKKIFTDV.

The segment at 1 to 23 (MTVVPGDHLLEPEAAGGGGGDPP) is disordered. Topologically, residues 1-184 (MTVVPGDHLL…EYPESSGPAR (184 aa)) are cytoplasmic. The helical transmembrane segment at 185–203 (GIAIVSVLVILISIVIFCL) threads the bilayer. At 204-244 (ETLPEFRDEKDYPASPSQDVFEAANNSTSGASSGASSFSDP) the chain is on the extracellular side. N-linked (GlcNAc...) asparagine glycosylation is present at Asn229. A helical membrane pass occupies residues 245 to 266 (FFVVETLCIIWFSFELLVRFFA). Cys267 carries S-palmitoyl cysteine lipidation. The Cytoplasmic segment spans residues 267 to 277 (CPSKATFSRNI). Residues 278–298 (MNLIDIVAIIPYFITLGTELA) form a helical membrane-spanning segment. Topologically, residues 299–312 (ERQGNGQQAMSLAI) are extracellular. Residues 313 to 331 (LRVIRLVRVFRIFKLSRHS) traverse the membrane as a helical; Voltage-sensor segment. Residues 332–347 (KGLQILGQTLKASMRE) lie on the Cytoplasmic side of the membrane. The helical transmembrane segment at 348 to 367 (LGLLIFFLFIGVILFSSAVY) threads the bilayer. The Extracellular segment spans residues 368 to 408 (FAEADDPSSGFNSIPDAFWWAVVTMTTVGYGDMHPVTIGGK). Residues 394 to 399 (TVGYGD) carry the Selectivity filter motif. A helical transmembrane segment spans residues 409 to 431 (IVGSLCAIAGVLTIALPVPVIVS). Over 432 to 525 (NFNYFYHRET…VNIKKIFTDV (94 aa)) the chain is Cytoplasmic. An interaction with KCNE4 region spans residues 432-525 (NFNYFYHRET…VNIKKIFTDV (94 aa)). Tyr449 carries the phosphotyrosine modification. Phosphoserine; by PKA is present on Ser470. Positions 523–525 (TDV) match the PDZ-binding motif.

It belongs to the potassium channel family. A (Shaker) (TC 1.A.1.2) subfamily. Kv1.3/KCNA3 sub-subfamily. As to quaternary structure, homotetramer. Forms heterooligomers with KCNE4 which inhibits KCNA3 activity by impairing localization to the cell membrane. The stoichiometry of KCNA3 and KCNE4 in the heterooligomers are 4:1, 4:2, 4:3 or 4:4 respectively. Increasing the number of KCNE4 subunits steadily slows the activation KCNA3 and decreases its abundance at the cell membrane. However, a single subunit of KCNE4 is sufficient for the cooperative enhancement of the inactivating function of the channel. Interacts with SEC24D; this interaction is reduced in the presence of KCNE4. Interacts with DLG1, DLG2 and DLG4 via their PDZ domains. In terms of processing, phosphorylation on Tyr-449 inhibits its channel activity. N-glycosylation promotes the cell surface expression.

It is found in the cell membrane. The enzyme catalyses K(+)(in) = K(+)(out). Activity is up-regulated by JAK2. Mediates the voltage-dependent potassium ion permeability of excitable membranes. Assuming opened or closed conformations in response to the voltage difference across the membrane, the protein forms a potassium-selective channel through which potassium ions may pass in accordance with their electrochemical gradient. This Rattus norvegicus (Rat) protein is Potassium voltage-gated channel subfamily A member 3 (Kcna3).